The following is a 478-amino-acid chain: GMP reductase (478 aa).

CBS domains follow at residues 95–152 and 153–211; these read VVDT…VRDI and ALSD…AVDA. NADP(+) is bound by residues 245 to 247 and 295 to 297; these read DTA and GVG. C302 acts as the Thioimidate intermediate in catalysis.

It belongs to the IMPDH/GMPR family. GuaB1 subfamily. In terms of assembly, homooctamer composed of two tetramers. The oligomerization state is regulated by ligands and pH. The cofactor is a monovalent cation.

It catalyses the reaction IMP + NH4(+) + NADP(+) = GMP + NADPH + 2 H(+). The protein operates within purine metabolism; IMP biosynthesis via salvage pathway. With respect to regulation, activity is allosterically regulated by the ATP/GTP ratio in a pH-dependent manner. At pH 7.8, GTP has only a minor positive effect and ATP only a minor negative effect on the activity, however, at lower pH values, the effects of ATP and GTP increase. ATP-dependent inhibition can be restored by increasing GTP concentration. IMP and XMP are competitive inhibitors. Functionally, involved in the purine-salvage pathway. Catalyzes the NADPH-dependent conversion of GMP to IMP. Is not essential for viability, but may contribute to the regulation of the purine nucleotide pool by recycling GMP to IMP. The protein is GMP reductase of Mycolicibacterium smegmatis (strain ATCC 700084 / mc(2)155) (Mycobacterium smegmatis).